The chain runs to 345 residues: S-adenosylmethionine:tRNA ribosyltransferase-isomerase (345 aa).

It belongs to the QueA family. As to quaternary structure, monomer.

It localises to the cytoplasm. It catalyses the reaction 7-aminomethyl-7-carbaguanosine(34) in tRNA + S-adenosyl-L-methionine = epoxyqueuosine(34) in tRNA + adenine + L-methionine + 2 H(+). Its pathway is tRNA modification; tRNA-queuosine biosynthesis. Functionally, transfers and isomerizes the ribose moiety from AdoMet to the 7-aminomethyl group of 7-deazaguanine (preQ1-tRNA) to give epoxyqueuosine (oQ-tRNA). In Shewanella sp. (strain ANA-3), this protein is S-adenosylmethionine:tRNA ribosyltransferase-isomerase.